We begin with the raw amino-acid sequence, 111 residues long: Large ribosomal subunit protein eL42 (111 aa).

Zn(2+)-binding residues include Cys12, Cys15, Cys72, and Cys77.

It belongs to the eukaryotic ribosomal protein eL42 family. As to quaternary structure, component of the large ribosomal subunit.

The protein resides in the cytoplasm. Functionally, component of the large ribosomal subunit. The ribosome is a large ribonucleoprotein complex responsible for the synthesis of proteins in the cell. This Oryctolagus cuniculus (Rabbit) protein is Large ribosomal subunit protein eL42 (RPL36A).